The sequence spans 119 residues: Flagellar transcriptional regulator FlhD (119 aa).

Belongs to the FlhD family. Homodimer; disulfide-linked. Forms a heterohexamer composed of two FlhC and four FlhD subunits. Each FlhC binds a FlhD dimer, forming a heterotrimer, and a hexamer assembles by dimerization of two heterotrimers.

Its subcellular location is the cytoplasm. In terms of biological role, functions in complex with FlhC as a master transcriptional regulator that regulates transcription of several flagellar and non-flagellar operons by binding to their promoter region. Activates expression of class 2 flagellar genes, including fliA, which is a flagellum-specific sigma factor that turns on the class 3 genes. Also regulates genes whose products function in a variety of physiological pathways. This is Flagellar transcriptional regulator FlhD from Cronobacter sakazakii (strain ATCC BAA-894) (Enterobacter sakazakii).